The following is a 273-amino-acid chain: tRNA pseudouridine synthase B (273 aa).

The active-site Nucleophile is Asp-38.

The protein belongs to the pseudouridine synthase TruB family. Type 1 subfamily.

The catalysed reaction is uridine(55) in tRNA = pseudouridine(55) in tRNA. In terms of biological role, responsible for synthesis of pseudouridine from uracil-55 in the psi GC loop of transfer RNAs. This is tRNA pseudouridine synthase B from Sulfurimonas denitrificans (strain ATCC 33889 / DSM 1251) (Thiomicrospira denitrificans (strain ATCC 33889 / DSM 1251)).